The following is a 235-amino-acid chain: Calcium-activated potassium channel subunit beta-2 (235 aa).

The ball and chain stretch occupies residues 1-45 (MFIWTSGRTSSSYRHDEKRNIYQKIRDHDLLDKRKTVTALKAGED). Residues 1–46 (MFIWTSGRTSSSYRHDEKRNIYQKIRDHDLLDKRKTVTALKAGEDR) lie on the Cytoplasmic side of the membrane. A helical transmembrane segment spans residues 47–67 (AILLGLAMMVCSIMMYFLLGI). Over 68-194 (TLLRSYMQSV…VILTKLYSSN (127 aa)) the chain is Extracellular. 3 N-linked (GlcNAc...) asparagine glycosylation sites follow: Asn88, Asn96, and Asn119. Residues 195 to 215 (VLFHSLFWPTCMMAGGVAIVA) traverse the membrane as a helical segment. At 216 to 235 (MVKLTQYLSLLCERIQRINR) the chain is on the cytoplasmic side.

It belongs to the KCNMB (TC 8.A.14.1) family. KCNMB2 subfamily. As to quaternary structure, interacts with KCNMA1 tetramer. There are probably 4 molecules of KCMNB2 per KCNMA1 tetramer. N-glycosylated. As to expression, highly expressed in brain and heart. Also expressed in lung.

The protein resides in the membrane. Its function is as follows. Regulatory subunit of the calcium activated potassium KCNMA1 (maxiK) channel. Modulates the calcium sensitivity and gating kinetics of KCNMA1, thereby contributing to KCNMA1 channel diversity. Acts as a negative regulator that confers rapid and complete inactivation of KCNMA1 channel complex. This chain is Calcium-activated potassium channel subunit beta-2 (Kcnmb2), found in Rattus norvegicus (Rat).